The chain runs to 233 residues: Triosephosphate isomerase (233 aa).

8 to 10 is a substrate binding site; that stretch reads NWK. Catalysis depends on histidine 91, which acts as the Electrophile. Catalysis depends on glutamate 155, which acts as the Proton acceptor. Residues glycine 161 and serine 192 each contribute to the substrate site.

This sequence belongs to the triosephosphate isomerase family. As to quaternary structure, homodimer.

The protein localises to the cytoplasm. It carries out the reaction D-glyceraldehyde 3-phosphate = dihydroxyacetone phosphate. It functions in the pathway carbohydrate biosynthesis; gluconeogenesis. Its pathway is carbohydrate degradation; glycolysis; D-glyceraldehyde 3-phosphate from glycerone phosphate: step 1/1. Functionally, involved in the gluconeogenesis. Catalyzes stereospecifically the conversion of dihydroxyacetone phosphate (DHAP) to D-glyceraldehyde-3-phosphate (G3P). The chain is Triosephosphate isomerase from Wolbachia sp. subsp. Brugia malayi (strain TRS).